The chain runs to 530 residues: Asc-type amino acid transporter 1 (530 aa).

Residues 1-36 (MRRDSDMASHIQQPGGHGNPGPAPSPSPGPGPGPGA) form a disordered region. Residues 21–33 (GPAPSPSPGPGPG) show a composition bias toward pro residues. 10 helical membrane passes run 46 to 66 (IGLV…GIFI), 78 to 98 (VGLA…GSLC), 119 to 139 (IFGG…MYPT), 192 to 212 (IQVI…TVGF), 274 to 294 (AIFI…VAYF), 316 to 336 (LLGY…FGGI), 368 to 388 (CTPI…MLVG), 394 to 414 (INYV…GLLV), 430 to 450 (LLVP…SFIS), and 454 to 474 (VCGV…LGVF). Residues 508 to 530 (EEENGPMGQPSPLPITDKPLKTQ) form a disordered region.

This sequence belongs to the amino acid-polyamine-organocation (APC) superfamily. Disulfide-linked heterodimer with the amino acid transport protein SLC3A2/4F2hc.

It localises to the cell membrane. The enzyme catalyses L-alanine(in) + glycine(out) = L-alanine(out) + glycine(in). It carries out the reaction L-serine(out) + L-alanine(in) = L-serine(in) + L-alanine(out). The catalysed reaction is L-threonine(out) + L-alanine(in) = L-threonine(in) + L-alanine(out). It catalyses the reaction L-cysteine(out) + L-alanine(in) = L-cysteine(in) + L-alanine(out). The enzyme catalyses 2-aminoisobutanoate(out) + L-alanine(in) = 2-aminoisobutanoate(in) + L-alanine(out). It carries out the reaction D-serine(out) + L-alanine(in) = D-serine(in) + L-alanine(out). The catalysed reaction is D-alanine(out) + L-alanine(in) = D-alanine(in) + L-alanine(out). It catalyses the reaction L-valine(out) + L-alanine(in) = L-valine(in) + L-alanine(out). The enzyme catalyses L-methionine(out) + L-alanine(in) = L-methionine(in) + L-alanine(out). It carries out the reaction beta-alanine(out) + L-alanine(in) = beta-alanine(in) + L-alanine(out). The catalysed reaction is D-cysteine(out) + L-alanine(in) = D-cysteine(in) + L-alanine(out). It catalyses the reaction D-threonine(out) + L-alanine(in) = D-threonine(in) + L-alanine(out). The enzyme catalyses D-isoleucine(out) + D-serine(in) = D-isoleucine(in) + D-serine(out). It carries out the reaction D-serine(in) = D-serine(out). In terms of biological role, associates with SLC3A2/4F2hc to form a functional heterodimeric complex that translocates small neutral L- and D-amino acids across the plasma membrane. Preferentially mediates exchange transport, but can also operate via facilitated diffusion. Acts as a major transporter for glycine, L- and D-serine in the central nervous system. At the spinal cord and brainstem regulates glycine metabolism and glycinergic inhibitory neurotransmission by providing for glycine de novo synthesis from L-serine and glycine recycling from astrocytes to glycinergic motor neurons. At Schaffer collateral-CA1 synapses mediates D-serine and glycine release that modulates post-synaptic activation of NMDA receptors and excitatory glutamatergic transmission. May regulate D-serine release from mesenchymal progenitors located in developing subcutaneous adipose tissue, favoring white adipocyte over thermogenic beige adipocyte lineage commitment. This is Asc-type amino acid transporter 1 (Slc7a10) from Rattus norvegicus (Rat).